The sequence spans 208 residues: Protein-L-isoaspartate O-methyltransferase (208 aa).

Serine 59 is an active-site residue.

Belongs to the methyltransferase superfamily. L-isoaspartyl/D-aspartyl protein methyltransferase family.

The protein resides in the cytoplasm. The catalysed reaction is [protein]-L-isoaspartate + S-adenosyl-L-methionine = [protein]-L-isoaspartate alpha-methyl ester + S-adenosyl-L-homocysteine. Its function is as follows. Catalyzes the methyl esterification of L-isoaspartyl residues in peptides and proteins that result from spontaneous decomposition of normal L-aspartyl and L-asparaginyl residues. It plays a role in the repair and/or degradation of damaged proteins. The polypeptide is Protein-L-isoaspartate O-methyltransferase (Vibrio vulnificus (strain CMCP6)).